The following is an 806-amino-acid chain: Acetyl-CoA decarbonylase/synthase complex subunit alpha 1 (806 aa).

Cys73, Cys76, Cys77, Cys79, Cys84, and Cys94 together coordinate [4Fe-4S] cluster. His117 is a binding site for CO. 3 residues coordinate [Ni-4Fe-4S] cluster: His250, Cys278, and Cys323. 4Fe-4S ferredoxin-type domains are found at residues 407 to 436 (DEEF…IPEA) and 446 to 475 (SYLD…LNII). Residues Cys417, Cys420, Cys423, Cys427, Cys455, Cys458, Cys461, and Cys465 each coordinate [4Fe-4S] cluster. [Ni-4Fe-4S] cluster-binding residues include Cys523, Cys552, and Cys587.

This sequence belongs to the Ni-containing carbon monoxide dehydrogenase family. As to quaternary structure, heterotetramer of two alpha and two epsilon subunits. The ACDS complex is made up of alpha, epsilon, beta, gamma and delta subunits with a probable stoichiometry of (alpha(2)epsilon(2))(4)-beta(8)-(gamma(1)delta(1))(8). The cofactor is [4Fe-4S] cluster. It depends on [Ni-4Fe-4S] cluster as a cofactor.

The catalysed reaction is CO + 2 oxidized [2Fe-2S]-[ferredoxin] + H2O = 2 reduced [2Fe-2S]-[ferredoxin] + CO2 + 2 H(+). Its pathway is one-carbon metabolism; methanogenesis from acetate. Carbon monoxide dehydrogenase activity is inhibited by KCN and is rapidly inactivated by O(2). Its function is as follows. Part of the ACDS complex that catalyzes the reversible cleavage of acetyl-CoA, allowing growth on acetate as sole source of carbon and energy. The alpha-epsilon subcomponent functions as a carbon monoxide dehydrogenase. The protein is Acetyl-CoA decarbonylase/synthase complex subunit alpha 1 of Methanosarcina barkeri (strain Fusaro / DSM 804).